Here is a 199-residue protein sequence, read N- to C-terminus: Recombination protein RecR (199 aa).

The C4-type zinc finger occupies 57-72; it reads CEICGNMDTKNICHIC. One can recognise a Toprim domain in the interval 80–175; the sequence is STIAIVETVA…KISRLASGIP (96 aa).

This sequence belongs to the RecR family.

Functionally, may play a role in DNA repair. It seems to be involved in an RecBC-independent recombinational process of DNA repair. It may act with RecF and RecO. In Rickettsia typhi (strain ATCC VR-144 / Wilmington), this protein is Recombination protein RecR.